The following is a 492-amino-acid chain: Ribose import ATP-binding protein RbsA (492 aa).

ABC transporter domains follow at residues 3–239 (IDMR…VGRK) and 238–492 (RKLE…TGGK). ATP is bound at residue 35 to 42 (GENGAGKS).

It belongs to the ABC transporter superfamily. Ribose importer (TC 3.A.1.2.1) family. The complex is composed of an ATP-binding protein (RbsA), two transmembrane proteins (RbsC) and a solute-binding protein (RbsB).

The protein localises to the cell membrane. It carries out the reaction D-ribose(out) + ATP + H2O = D-ribose(in) + ADP + phosphate + H(+). Its function is as follows. Part of the ABC transporter complex RbsABC involved in ribose import. Responsible for energy coupling to the transport system. The sequence is that of Ribose import ATP-binding protein RbsA from Streptococcus agalactiae serotype III (strain NEM316).